Consider the following 350-residue polypeptide: GTPase Obg (350 aa).

The region spanning 1-158 (MFIDSVKITL…RLVRLELKLI (158 aa)) is the Obg domain. In terms of domain architecture, OBG-type G spans 159–339 (ADVGLVGFPN…LKFMLLEEIK (181 aa)). GTP is bound by residues 165 to 172 (GFPNVGKS), 190 to 194 (FTTLT), 212 to 215 (DIPG), 280 to 283 (SKSD), and 320 to 322 (SSL). Positions 172 and 192 each coordinate Mg(2+).

It belongs to the TRAFAC class OBG-HflX-like GTPase superfamily. OBG GTPase family. Monomer. Mg(2+) serves as cofactor.

The protein resides in the cytoplasm. Its function is as follows. An essential GTPase which binds GTP, GDP and possibly (p)ppGpp with moderate affinity, with high nucleotide exchange rates and a fairly low GTP hydrolysis rate. Plays a role in control of the cell cycle, stress response, ribosome biogenesis and in those bacteria that undergo differentiation, in morphogenesis control. In Campylobacter jejuni (strain RM1221), this protein is GTPase Obg.